A 425-amino-acid polypeptide reads, in one-letter code: Adenosine 3'-phospho 5'-phosphosulfate transporter 1 (425 aa).

Transmembrane regions (helical) follow at residues 27–47 (FLILLGYSTVATPAAILIYYV), 102–122 (VIILLLFFFSGIQVTLVAMGV), 147–167 (TQFLIFCNRIVALVLSLMILA), 232–252 (YSWFEYGCGCTIAFGASLFLL), 263–283 (ITYTSFSGMILMAGYLLFDAF), 303–323 (MMFGVNFFSAILCAVSLIEQG), 342–360 (VFLLSLSGAIGQIFIYSTI), 365–387 (PIVFAVIMTIRQMLSIVLSTIMY), and 391–411 (LTFLAAIGFMIVFAAIFVDIH).

The protein belongs to the nucleotide-sugar transporter family. SLC35B subfamily.

It is found in the golgi apparatus membrane. Its function is as follows. Mediates the transport of adenosine 3'-phospho 5'-phosphosulfate (PAPS), from cytosol into Golgi. PAPS is a universal sulfuryl donor for sulfation events that take place in the Golgi. The chain is Adenosine 3'-phospho 5'-phosphosulfate transporter 1 (pst-1) from Caenorhabditis elegans.